The sequence spans 196 residues: Holliday junction branch migration complex subunit RuvA (196 aa).

The tract at residues 1–65 (MIGYLRGKII…EDALQLFGFH (65 aa)) is domain I. A domain II region spans residues 66 to 140 (DKEEKNLFLS…GKLVSIEEGG (75 aa)). Residues 140–144 (GVVAK) are flexible linker. The tract at residues 145–196 (AKSVAHTQITSALLNLGYKSQLVDQFVSSLPADIAVEDGIRKGFQTLSGGLS) is domain III.

It belongs to the RuvA family. Homotetramer. Forms an RuvA(8)-RuvB(12)-Holliday junction (HJ) complex. HJ DNA is sandwiched between 2 RuvA tetramers; dsDNA enters through RuvA and exits via RuvB. An RuvB hexamer assembles on each DNA strand where it exits the tetramer. Each RuvB hexamer is contacted by two RuvA subunits (via domain III) on 2 adjacent RuvB subunits; this complex drives branch migration. In the full resolvosome a probable DNA-RuvA(4)-RuvB(12)-RuvC(2) complex forms which resolves the HJ.

Its subcellular location is the cytoplasm. Its function is as follows. The RuvA-RuvB-RuvC complex processes Holliday junction (HJ) DNA during genetic recombination and DNA repair, while the RuvA-RuvB complex plays an important role in the rescue of blocked DNA replication forks via replication fork reversal (RFR). RuvA specifically binds to HJ cruciform DNA, conferring on it an open structure. The RuvB hexamer acts as an ATP-dependent pump, pulling dsDNA into and through the RuvAB complex. HJ branch migration allows RuvC to scan DNA until it finds its consensus sequence, where it cleaves and resolves the cruciform DNA. The chain is Holliday junction branch migration complex subunit RuvA from Bdellovibrio bacteriovorus (strain ATCC 15356 / DSM 50701 / NCIMB 9529 / HD100).